The primary structure comprises 391 residues: Odorant receptor 67d (391 aa).

Topologically, residues 1-45 are cytoplasmic; the sequence is MLKMAKVEPVERYCKVIRMIRFCVGFCGNDVADPNFRMWWLTYAV. The helical transmembrane segment at 46-66 threads the bilayer; that stretch reads MAAIAFFFACTGYTIYVGVVI. Topologically, residues 67–71 are extracellular; the sequence is NGDLT. The helical transmembrane segment at 72-92 threads the bilayer; it reads IILQALAMVGSAVQGLTKLLV. The Cytoplasmic portion of the chain corresponds to 93-140; it reads TANNASHMREVQNTYEDIYREYGSKGDEYAKCLEKRIRITWTLLIGFM. The helical transmembrane segment at 141–161 threads the bilayer; it reads LVYIILLGLVITFPIFYLLIL. The Extracellular segment spans residues 162 to 164; it reads HQK. A helical membrane pass occupies residues 165–185; it reads VLVMQFLIPFLDHTTDGGHLI. Residues 186-191 lie on the Cytoplasmic side of the membrane; that stretch reads LTAAHV. A helical membrane pass occupies residues 192–212; it reads ILITFGGFGNYGGDMYLFLFV. Residues 213 to 268 are Extracellular-facing; sequence THVPLIKDIFCVKLTEFNELVMKRNDFPKVRAMLCDLLVWHQLYTRMLQTTKKIYS. A helical transmembrane segment spans residues 269–289; sequence IVLFVQLSTTCVGLLCTISCI. At 290 to 297 the chain is on the cytoplasmic side; it reads FMKAWPAA. The chain crosses the membrane as a helical span at residues 298 to 318; sequence PLYLLYAAITLYTFCGLGTLV. Over 319–391 the chain is Extracellular; that stretch reads ENSNEDFLSV…FSMMLMNYLG (73 aa).

Belongs to the insect chemoreceptor superfamily. Heteromeric odorant receptor channel (TC 1.A.69) family. Or67d subfamily. In terms of assembly, interacts with Orco. Complexes exist early in the endomembrane system in olfactory sensory neurons (OSNs), coupling these complexes to the conserved ciliary trafficking pathway. In terms of tissue distribution, expressed in antenna.

It is found in the cell membrane. Its function is as follows. Plays a role in detection and sensitivity to pheromones and signal transduction of the fatty-acid-derived male pheromone 11-cis vaccenyl acetate (cVA). Acts in concert with Snmp and lush to capture cVA molecules on the surface of Or67d expressing olfactory dendrites and facilitate their transfer to the odorant-receptor Orco complex. Necessary to mediate behavioral responses to cVA by regulating both male and female mating behavior. Activation of Or67d neurons by cVA inhibits courtship of other males, whereas in females their activation promotes receptivity to other males. May form a complex with Orco to form odorant-sensing units, providing sensitive and prolonged odorant signaling and calcium permeability. The sequence is that of Odorant receptor 67d (Or67d) from Drosophila melanogaster (Fruit fly).